The primary structure comprises 55 residues: Cicadin (55 aa).

Over residues 1–26 (NEYHGFVDKANNENKRKKQQGRDDFV) the composition is skewed to basic and acidic residues. Positions 1–39 (NEYHGFVDKANNENKRKKQQGRDDFVVKPNNFANRRRKD) are disordered.

Its function is as follows. Possesses antifungal activity against B.cinerea, M.arachidicola, F.oxysporum, R.solani and C.comatus. In terms of biological role, suppresses the activity of HIV-1 reverse transcriptase and stimulates the proliferation of murine splenocytes. This Cicada flammata protein is Cicadin.